Consider the following 499-residue polypeptide: Glycerol kinase (499 aa).

Position 15 (Thr15) interacts with ADP. ATP is bound by residues Thr15, Thr16, and Ser17. Thr15 serves as a coordination point for sn-glycerol 3-phosphate. Arg19 is an ADP binding site. Sn-glycerol 3-phosphate-binding residues include Arg85, Glu86, Tyr137, and Asp246. Residues Arg85, Glu86, Tyr137, Asp246, and Gln247 each coordinate glycerol. The ADP site is built by Thr268 and Gly311. 4 residues coordinate ATP: Thr268, Gly311, Gln315, and Gly412. ADP contacts are provided by Gly412 and Asn416.

It belongs to the FGGY kinase family.

It carries out the reaction glycerol + ATP = sn-glycerol 3-phosphate + ADP + H(+). The protein operates within polyol metabolism; glycerol degradation via glycerol kinase pathway; sn-glycerol 3-phosphate from glycerol: step 1/1. Its activity is regulated as follows. Inhibited by fructose 1,6-bisphosphate (FBP). Its function is as follows. Key enzyme in the regulation of glycerol uptake and metabolism. Catalyzes the phosphorylation of glycerol to yield sn-glycerol 3-phosphate. In Parabacteroides distasonis (strain ATCC 8503 / DSM 20701 / CIP 104284 / JCM 5825 / NCTC 11152), this protein is Glycerol kinase.